The sequence spans 91 residues: Acyl carrier protein (91 aa).

The 76-residue stretch at 6–81 folds into the Carrier domain; the sequence is EEIIAELGQI…DIVAYIQKLE (76 aa). Ser41 is modified (O-(pantetheine 4'-phosphoryl)serine).

This sequence belongs to the acyl carrier protein (ACP) family. 4'-phosphopantetheine is transferred from CoA to a specific serine of apo-ACP by AcpS. This modification is essential for activity because fatty acids are bound in thioester linkage to the sulfhydryl of the prosthetic group.

Its subcellular location is the cytoplasm. Its pathway is lipid metabolism; fatty acid biosynthesis. Carrier of the growing fatty acid chain in fatty acid biosynthesis. This chain is Acyl carrier protein, found in Rhodococcus erythropolis (strain PR4 / NBRC 100887).